Reading from the N-terminus, the 250-residue chain is Octanoyltransferase (250 aa).

Residues 49-230 (DEINDVILVL…ALDDAFAGRL (182 aa)) form the BPL/LPL catalytic domain. Substrate contacts are provided by residues 87–94 (RGGRITWH), 160–162 (ALG), and 173–175 (GLA). The active-site Acyl-thioester intermediate is C191.

Belongs to the LipB family.

It is found in the cytoplasm. The catalysed reaction is octanoyl-[ACP] + L-lysyl-[protein] = N(6)-octanoyl-L-lysyl-[protein] + holo-[ACP] + H(+). Its pathway is protein modification; protein lipoylation via endogenous pathway; protein N(6)-(lipoyl)lysine from octanoyl-[acyl-carrier-protein]: step 1/2. In terms of biological role, catalyzes the transfer of endogenously produced octanoic acid from octanoyl-acyl-carrier-protein onto the lipoyl domains of lipoate-dependent enzymes. Lipoyl-ACP can also act as a substrate although octanoyl-ACP is likely to be the physiological substrate. This chain is Octanoyltransferase, found in Corynebacterium diphtheriae (strain ATCC 700971 / NCTC 13129 / Biotype gravis).